We begin with the raw amino-acid sequence, 282 residues long: Probable endonuclease 4 (282 aa).

Residues His66, His106, Glu143, Asp176, His179, His213, Asp226, His228, and Glu258 each contribute to the Zn(2+) site.

Belongs to the AP endonuclease 2 family. Zn(2+) is required as a cofactor.

The catalysed reaction is Endonucleolytic cleavage to 5'-phosphooligonucleotide end-products.. In terms of biological role, endonuclease IV plays a role in DNA repair. It cleaves phosphodiester bonds at apurinic or apyrimidinic (AP) sites, generating a 3'-hydroxyl group and a 5'-terminal sugar phosphate. The protein is Probable endonuclease 4 of Aquifex aeolicus (strain VF5).